The sequence spans 345 residues: Tubulin-folding cofactor C (345 aa).

An N-acetylmethionine modification is found at M1. The segment covering 1–10 (MEDDGQSSVA) has biased composition (polar residues). Residues 1-83 (MEDDGQSSVA…SRLASSSTDS (83 aa)) form a disordered region. Over residues 23 to 39 (DMLERLSARHQARKSDS) the composition is skewed to basic and acidic residues. The span at 40–55 (PDSSSSSSSTLESTSS) shows a compositional bias: low complexity. Basic and acidic residues predominate over residues 61–73 (SDSKRSIESRIAE). Residues 74-83 (SRLASSSTDS) show a composition bias toward low complexity. A C-CAP/cofactor C-like domain is found at 169–318 (PPKLVPVRDS…NWANVDDFRW (150 aa)).

It belongs to the TBCC family. As to quaternary structure, supercomplex made of cofactors A to E. Cofactors A and D function by capturing and stabilizing tubulin in a quasi-native conformation. Cofactor E binds to the cofactor D-tubulin complex; interaction with cofactor C then causes the release of tubulin polypeptides that are committed to the native state. Ubiquitously expressed (at protein level). Present in leaves, roots, flowers, and stems.

Its subcellular location is the cytoplasm. Its function is as follows. Essential tubulin-folding protein involved in the final step of the tubulin folding pathway. Required for continuous microtubule cytoskeleton organization, mitotic division, cytokinesis, and to couple cell cycle progression to cell division in embryos and endosperms. Not essential for cell viability. Binds probably to the multimeric supercomplex, stimulating GTP hydrolysis by the bound beta-tubulin and the release of the alpha-/beta-tubulin heterodimer. The protein is Tubulin-folding cofactor C (TFCC) of Arabidopsis thaliana (Mouse-ear cress).